The following is a 1038-amino-acid chain: Dorsal-ventral patterning protein Sog (1038 aa).

Topologically, residues 1–53 (MANKLRKSNAIEWATATGTVPLLERSCCHSEDAALEPQASKTSHREQAPILRH) are cytoplasmic. The chain crosses the membrane as a helical; Signal-anchor for type II membrane protein span at residues 54–74 (LSQLSHLLIIAGLLIVCLAGV). Residues 75 to 1038 (TEGRRHAPLM…QPHHQQRSSS (964 aa)) lie on the Extracellular side of the membrane. One can recognise a VWFC 1 domain in the interval 100–175 (TECQFGKVLR…LPGKCCKTCP (76 aa)). Residues N179 and N287 are each glycosylated (N-linked (GlcNAc...) asparagine). CHRD domains follow at residues 197 to 337 (NMKH…KYTA), 339 to 471 (QTEL…TRAS), 474 to 588 (IFQT…PRPV), and 592 to 713 (RDSA…STKV). N-linked (GlcNAc...) asparagine glycans are attached at residues N520, N666, N752, and N821. The region spanning 742-804 (TKCFHSGRFY…RDGECCPSCV (63 aa)) is the VWFC 2 domain. 2 VWFC domains span residues 830-899 (RGCR…KICP) and 939-1020 (GGCK…TQCR).

Belongs to the chordin family. As to quaternary structure, component of a complex composed of dpp, sog and tsg. Interacts with palmitoyltransferase Hip14. In terms of processing, palmitoylated, probably by Hip14. Cleaved by metalloproteases tok and tld. Cleavage by tok during pupal development contributes to specification of the posterior crossvein in the wing. In terms of tissue distribution, abuts the dorsal dpp-expressing cells in a lateral stripe 14-16 cells wide. Later in embryogenesis it is expressed in neuroectoderm and in the endoderm spaced along the anterior-posterior axis of the developing gut.

The protein resides in the golgi apparatus membrane. The protein localises to the cell membrane. It is found in the secreted. Its function is as follows. Putative negative growth factor. Antagonist of dpp, a protein involved in patterning the dorsal region and in the development of the neuroectoderm; dpp inhibition is enhanced by tsg. Required for establishment of a narrow stripe of peak levels of BMP signaling in the dorsal midline of early embryos, that will give rise to the amnioserosa. During pupal development, plays a role in specification of the posterior crossvein in the wing. Exhibits both agonist and antagonist activities towards BMP signaling during pupal wing patterning. This Drosophila melanogaster (Fruit fly) protein is Dorsal-ventral patterning protein Sog (sog).